Here is an 88-residue protein sequence, read N- to C-terminus: Small ribosomal subunit protein uS15 (88 aa).

This sequence belongs to the universal ribosomal protein uS15 family. As to quaternary structure, part of the 30S ribosomal subunit. Forms a bridge to the 50S subunit in the 70S ribosome, contacting the 23S rRNA.

In terms of biological role, one of the primary rRNA binding proteins, it binds directly to 16S rRNA where it helps nucleate assembly of the platform of the 30S subunit by binding and bridging several RNA helices of the 16S rRNA. Its function is as follows. Forms an intersubunit bridge (bridge B4) with the 23S rRNA of the 50S subunit in the ribosome. In Mycoplasmopsis pulmonis (strain UAB CTIP) (Mycoplasma pulmonis), this protein is Small ribosomal subunit protein uS15.